Reading from the N-terminus, the 1167-residue chain is RNA-directed RNA polymerase (1167 aa).

Residues 553 to 735 (LTYGILAEAT…KALASYTGLE (183 aa)) form the RdRp catalytic domain.

Belongs to the reoviridae RNA-directed RNA polymerase family. In terms of assembly, interacts with VP3 (Potential). Interacts with VP2 (Potential). Interacts with NSP5; this interaction is probably necessary for the formation of functional virus factories.

It localises to the virion. It catalyses the reaction RNA(n) + a ribonucleoside 5'-triphosphate = RNA(n+1) + diphosphate. Its function is as follows. RNA-directed RNA polymerase that is involved in both transcription and genome replication. Together with VP3 capping enzyme, forms an enzyme complex positioned near the channels situated at each of the five-fold vertices of the core. Following infection, the outermost layer of the virus is lost, leaving a double-layered particle (DLP) made up of the core and VP6 shell. VP1 then catalyzes the transcription of fully conservative plus-strand genomic RNAs that are extruded through the DLP's channels into the cytoplasm where they function as mRNAs for translation of viral proteins. One copy of each of the viral (+)RNAs is also recruited during core assembly, together with newly synthesized polymerase complexes and VP2. The polymerase of these novo-formed particles catalyzes the synthesis of complementary minus-strands leading to dsDNA formation. To do so, the polymerase specifically recognizes conserved 3' sequence(s) in plus-strand RNA templates. Once dsRNA synthesis is complete, the polymerase switches to the transcriptional mode, thus providing secondary transcription. This is RNA-directed RNA polymerase from Rotavirus X (isolate RVX/Human/Bangladesh/NADRV-B219/2002/GXP[X]) (RV ADRV-N).